We begin with the raw amino-acid sequence, 219 residues long: Cytidylate kinase (219 aa).

Position 15 to 23 (15 to 23 (GPAASGKGT)) interacts with ATP.

Belongs to the cytidylate kinase family. Type 1 subfamily.

The protein localises to the cytoplasm. It carries out the reaction CMP + ATP = CDP + ADP. It catalyses the reaction dCMP + ATP = dCDP + ADP. This chain is Cytidylate kinase, found in Brucella suis biovar 1 (strain 1330).